The primary structure comprises 368 residues: HECT-type ubiquitin ligase-interacting protein apyA (368 aa).

This sequence belongs to the arrestin family. In terms of assembly, interacts with hulA.

Its function is as follows. May be involved in signaling by recognizing appropriately phosphorylated substrates via its arrestin domains and then recruit a HECT-type ubiquitin ligase such as hulA, leading to ubiquitination of the substrate, providing a link between ubiquitination and phosphorylation in protein regulation and stability. This chain is HECT-type ubiquitin ligase-interacting protein apyA (apyA), found in Emericella nidulans (strain FGSC A4 / ATCC 38163 / CBS 112.46 / NRRL 194 / M139) (Aspergillus nidulans).